The primary structure comprises 414 residues: Enterobactin exporter EntS (414 aa).

Over 1–21 the chain is Cytoplasmic; the sequence is MNRQSWLLNLSLLKTHPAFRA. The helical transmembrane segment at 22-42 threads the bilayer; that stretch reads VFLARFISIVSLGLLGVAVPV. Topologically, residues 43–55 are periplasmic; it reads QIQMMTHSTWQVG. Residues 56–76 form a helical membrane-spanning segment; that stretch reads LSVTLTGGAMFIGLMVGGVLA. Over 77 to 83 the chain is Cytoplasmic; that stretch reads DRYERKK. A helical transmembrane segment spans residues 84–104; that stretch reads VILLARGTCGIGFIGLCVNAL. Over 105–109 the chain is Periplasmic; it reads LPEPS. The chain crosses the membrane as a helical span at residues 110-130; the sequence is LLAIYLLGLWDGFFASLGVTA. Residues 131–156 are Cytoplasmic-facing; it reads LLAATPALVGRENLMQAGAITMLTVR. The chain crosses the membrane as a helical span at residues 157–177; the sequence is LGSVISPMLGGILLASGGVAW. Residue N178 is a topological domain, periplasmic. Residues 179–199 traverse the membrane as a helical segment; that stretch reads YGLAAAGTFITLLPLLTLPRL. Topologically, residues 200–218 are cytoplasmic; the sequence is PVPPQPRENPFIALLAAFR. Residues 219–239 traverse the membrane as a helical segment; it reads FLLASPLIGGIALLGGLVTMA. The Periplasmic segment spans residues 240–256; that stretch reads SAVRVLYPALAMSWQMS. The chain crosses the membrane as a helical span at residues 257–277; sequence AAQIGLLYAAIPLGAAIGALT. The Cytoplasmic segment spans residues 278 to 287; sequence SGQLAHSVRP. A helical transmembrane segment spans residues 288-307; sequence GLIMLVSTVGSFLAVGLFAI. Residues 308–313 are Periplasmic-facing; it reads MPVWIA. The helical transmembrane segment at 314–336 threads the bilayer; the sequence is GVICLALFGWLSAISSLLQYTLL. The Cytoplasmic portion of the chain corresponds to 337-356; sequence QTQTPENMLGRMNGLWTAQN. The helical transmembrane segment at 357–377 threads the bilayer; the sequence is VTGDAIGAALLGGLGAMMTPV. Residue A378 is a topological domain, periplasmic. The chain crosses the membrane as a helical span at residues 379-399; it reads SASVSGFGLVIIGLLLLLVLG. At 400-414 the chain is on the cytoplasmic side; sequence ELRRFRQTPPVSDAG.

Belongs to the major facilitator superfamily. EntS (TC 2.A.1.38) family.

It is found in the cell inner membrane. Functionally, component of an export pathway for enterobactin. The protein is Enterobactin exporter EntS of Salmonella typhimurium (strain LT2 / SGSC1412 / ATCC 700720).